Here is a 263-residue protein sequence, read N- to C-terminus: Putative methyltransferase DDB_G0268948 (263 aa).

This sequence belongs to the methyltransferase superfamily.

This Dictyostelium discoideum (Social amoeba) protein is Putative methyltransferase DDB_G0268948.